The sequence spans 95 residues: Small ribosomal subunit protein uS19 (95 aa).

The protein belongs to the universal ribosomal protein uS19 family.

Its function is as follows. Protein S19 forms a complex with S13 that binds strongly to the 16S ribosomal RNA. In Coxiella burnetii (strain CbuK_Q154) (Coxiella burnetii (strain Q154)), this protein is Small ribosomal subunit protein uS19.